The following is a 352-amino-acid chain: C5a anaphylatoxin chemotactic receptor 1 (352 aa).

The Extracellular segment spans residues 1-38 (MASMNFSPPEYPDYGTATLDPNIFVDESLNTPKLSVPD). 2 positions are modified to sulfotyrosine: tyrosine 11 and tyrosine 14. Residues 39-65 (MIALVIFVMVFLVGVPGNFLVVWVTGF) traverse the membrane as a helical segment. Residues 66 to 70 (EVRRT) lie on the Cytoplasmic side of the membrane. Residues 71 to 94 (INAIWFLNLAVADLLSCLALPILF) traverse the membrane as a helical segment. Residues 95-111 (SSIVQQGYWPFGNAACR) lie on the Extracellular side of the membrane. Cysteine 110 and cysteine 189 are oxidised to a cystine. A helical membrane pass occupies residues 112–133 (ILPSLILLNMYASILLLTTISA). The Cytoplasmic portion of the chain corresponds to 134–154 (DRFVLVFNPIWCQNYRGPQLA). A helical transmembrane segment spans residues 155–175 (WAACSVAWAVALLLTVPSFIF). Over 176 to 202 (RGVHTEYFPFWMTCGVDYSGVGVLVER) the chain is Extracellular. The chain crosses the membrane as a helical span at residues 203–228 (GVAILRLLMGFLGPLVILSICYTFLL). The Cytoplasmic portion of the chain corresponds to 229 to 244 (IRTWSRKATRSTKTLK). A helical membrane pass occupies residues 245–267 (VVVAVVVSFFVLWLPYQVTGMMM). Residues 268 to 284 (ALFYKHSESFRRVSRLD) are Extracellular-facing. The helical transmembrane segment at 285 to 305 (SLCVAVAYINCCINPIIYVLA) threads the bilayer. Residues 306–352 (AQGFHSRFLKSLPARLRQVLAEESVGRDSKSITLSTVDTPAQKSQGV) lie on the Cytoplasmic side of the membrane. 5 positions are modified to phosphoserine: serine 316, serine 329, serine 334, serine 336, and serine 340.

The protein belongs to the G-protein coupled receptor 1 family. In terms of assembly, homodimer. May also form higher-order oligomers. Interacts (when phosphorylated) with ARRB1 and ARRB2; the interaction is associated with internalization of C5aR. Post-translationally, sulfation plays a critical role in the association of C5aR with C5a, but no significant role in the ability of the receptor to transduce a signal and mobilize calcium in response to a small peptide agonist. In terms of processing, phosphorylated on serine residues in response to C5a binding, resulting in internalization of the receptor and short-term desensitization to C5a.

The protein resides in the cell membrane. It is found in the cytoplasmic vesicle. Receptor for the chemotactic and inflammatory peptide anaphylatoxin C5a. The ligand interacts with at least two sites on the receptor: a high-affinity site on the extracellular N-terminus, and a second site in the transmembrane region which activates downstream signaling events. Receptor activation stimulates chemotaxis, granule enzyme release, intracellular calcium release and superoxide anion production. The polypeptide is C5a anaphylatoxin chemotactic receptor 1 (C5AR1) (Canis lupus familiaris (Dog)).